Reading from the N-terminus, the 452-residue chain is Pup--protein ligase (452 aa).

A Mg(2+)-binding site is contributed by Glu9. Arg53 lines the ATP pocket. Mg(2+) is bound at residue Tyr55. Catalysis depends on Asp57, which acts as the Proton acceptor. Glu63 serves as a coordination point for Mg(2+). Thr66 and Trp419 together coordinate ATP.

It belongs to the Pup ligase/Pup deamidase family. Pup-conjugating enzyme subfamily.

It catalyses the reaction ATP + [prokaryotic ubiquitin-like protein]-L-glutamate + [protein]-L-lysine = ADP + phosphate + N(6)-([prokaryotic ubiquitin-like protein]-gamma-L-glutamyl)-[protein]-L-lysine.. The protein operates within protein degradation; proteasomal Pup-dependent pathway. It functions in the pathway protein modification; protein pupylation. Its function is as follows. Catalyzes the covalent attachment of the prokaryotic ubiquitin-like protein modifier Pup to the proteasomal substrate proteins, thereby targeting them for proteasomal degradation. This tagging system is termed pupylation. The ligation reaction involves the side-chain carboxylate of the C-terminal glutamate of Pup and the side-chain amino group of a substrate lysine. The polypeptide is Pup--protein ligase (Mycolicibacterium gilvum (strain PYR-GCK) (Mycobacterium gilvum (strain PYR-GCK))).